A 366-amino-acid chain; its full sequence is cAMP-dependent protein kinase regulatory subunit (366 aa).

Positions Met1–Leu121 are dimerization and phosphorylation. Residues Gln55 to Ser87 form a disordered region. Positions Arg82–Ile86 match the Pseudophosphorylation motif motif. Ser87 carries the phosphoserine modification. Residues Leu122–Gln239, Glu187, Arg196, Ile240–Thr366, Glu311, and Arg320 contribute to the 3',5'-cyclic AMP site.

It belongs to the cAMP-dependent kinase regulatory chain family. As to quaternary structure, tetramer, composed of 2 regulatory (R) and 2 catalytic (C) subunits. In the presence of cAMP it dissociates into 2 active monomeric C subunits and an R dimer that binds four cAMP molecules. The pseudophosphorylation site binds to the substrate-binding region of the catalytic chain but is not phosphorylated. The physiological significance of phosphorylations by other kinases is unclear.

The protein localises to the cytoplasm. The protein resides in the cytosol. Controls the rhythmic contraction of enteric muscles probably by regulating G-protein coupled receptor aex-2-mediated calcium influx in GABAergic DVB neurons. This is cAMP-dependent protein kinase regulatory subunit (kin-2) from Caenorhabditis elegans.